The chain runs to 509 residues: Proton-gated ion channel subunit pbo-5 (509 aa).

The N-terminal stretch at 1 to 21 (MTRLSILQHLLTFLILSKINA) is a signal peptide. At 22–275 (TSTTESYFDS…ISLKRRPLFY (254 aa)) the chain is on the extracellular side. Cysteine 193 and cysteine 207 are joined by a disulfide. The next 3 membrane-spanning stretches (helical) occupy residues 276–296 (MVTL…GLFA), 310–330 (LGVT…EKVP), and 336–356 (VPLL…AAMT). Topologically, residues 357-487 (TGIVMKVHRL…GYVRISERLD (131 aa)) are cytoplasmic. Residues 488-508 (ILFMFLFLSTVTIPVAVLFYL) form a helical membrane-spanning segment.

The protein belongs to the ligand-gated ion channel (TC 1.A.9) family. Acetylcholine receptor (TC 1.A.9.1) subfamily. In terms of assembly, the functional channel is a heterooligomer of pbo-5 and pbo-6. May self-associate to form homooligomers with negligible ion channel activity. As to expression, expressed in the posterior body muscles. Also detected in the RIFL, RIFR and RIS head neurons.

It is found in the membrane. Functionally, forms a proton-gated ion channel with pbo-6 that is activated by acidification of the posterior coelomic space, leading to posterior body wall muscle contraction (pBoc) during the defecation cycle. Probably by regulating the defecation motor program, required for fatty acid uptake by intestinal cells. Does not bind neurotransmitters such as acetylcholine, gamma-aminobutyric acid, glycine, serotonin, glutamate or choline. This Caenorhabditis elegans protein is Proton-gated ion channel subunit pbo-5.